Consider the following 396-residue polypeptide: Pyridinium-3,5-bisthiocarboxylic acid mononucleotide nickel insertion protein (396 aa).

The protein belongs to the LarC family.

The enzyme catalyses Ni(II)-pyridinium-3,5-bisthiocarboxylate mononucleotide = pyridinium-3,5-bisthiocarboxylate mononucleotide + Ni(2+). Involved in the biosynthesis of a nickel-pincer cofactor ((SCS)Ni(II) pincer complex). Binds Ni(2+), and functions in nickel delivery to pyridinium-3,5-bisthiocarboxylic acid mononucleotide (P2TMN), to form the mature cofactor. Is thus probably required for the activation of nickel-pincer cofactor-dependent enzymes. The polypeptide is Pyridinium-3,5-bisthiocarboxylic acid mononucleotide nickel insertion protein (Moorella thermoacetica (strain ATCC 39073 / JCM 9320)).